A 593-amino-acid polypeptide reads, in one-letter code: Aspartate--tRNA ligase (593 aa).

E180 serves as a coordination point for L-aspartate. Positions 204–207 (QIFK) are aspartate. R226 provides a ligand contact to L-aspartate. ATP contacts are provided by residues 226 to 228 (RDE) and Q235. Residue H453 participates in L-aspartate binding. E487 is an ATP binding site. R494 is an L-aspartate binding site. 539-542 (GLDR) is a binding site for ATP.

The protein belongs to the class-II aminoacyl-tRNA synthetase family. Type 1 subfamily. In terms of assembly, homodimer.

Its subcellular location is the cytoplasm. The catalysed reaction is tRNA(Asp) + L-aspartate + ATP = L-aspartyl-tRNA(Asp) + AMP + diphosphate. In terms of biological role, catalyzes the attachment of L-aspartate to tRNA(Asp) in a two-step reaction: L-aspartate is first activated by ATP to form Asp-AMP and then transferred to the acceptor end of tRNA(Asp). This chain is Aspartate--tRNA ligase, found in Clostridium botulinum (strain Kyoto / Type A2).